Here is a 219-residue protein sequence, read N- to C-terminus: Probable oxidoreductase virH (219 aa).

Belongs to the oxidoreductase OpS7 family.

Its pathway is secondary metabolite biosynthesis. Probable oxidoreductase; part of the gene cluster that mediates the biosynthesis of virensols and trichoxide, fungal natural products that contain or are derived from a salicylaldehyde core. The pathway begins with the synthesis of the reduced chain in virensol C by the highly reducing polyketide synthase virA via condensation of one acetate and 8 malonate units. VirA has interesting programming rules since the first 2 ketides are fully reduced, the 3 following ketides undergo beta-dehydration, and the last 3 ketides are only reduced to beta-hydroxys to yield the trihydroxy portion. The production of aldehyde virensol C by virA alone is surprising, since virA does not contain a reductase (R) domain that is typically associated with reductive product release in HRPKS. The cupin-domain enzyme virC is involved in enhancing virA product turnover. The short-chain dehydrogenase virB then oxidizes the C-7 alcohol of virensol C to a ketone, yielding virensol D. Virensol D is further transformed to salicylaldehyde 5-deoxyaurocitrin by the short-chain dehydrogenase virD. VirD catalyzes the dehydrogenation of C-3 to form the beta-ketone aldehyde, which is followed by the generation of the nucleophilic C-2 that is required for the intramolecular aldol condensation between C-2 and C-7, itself followed by dehydration and aromatization which leads to salicylaldehyde 5-deoxyaurocitrin. While the dehydrogenation of virensol D is definitely catalyzed by virD, the aldol condensation and dehydration may be uncatalyzed or assisted by virD. The short chain dehydrogenase virG then converts salicylaldehyde 5-deoxyaurocitrin into virensol B which is further hydroxylated by the cytochrome P450 monooxygenase virE to yield the hydroquinone virensol A. VirI then may oxidize virensol A to form the quinone, while virH performs the epoxidation. Finally, the two remaining short-chain dehydrogenases, virK and virL, are probably responsible for reducing the ketones to the corresponding alcohols to furnish the epoxycyclohexanol structure in trichoxide. This Hypocrea virens (strain Gv29-8 / FGSC 10586) (Gliocladium virens) protein is Probable oxidoreductase virH.